The chain runs to 635 residues: Interferon-induced GTP-binding protein Mx1 (635 aa).

One can recognise a Dynamin-type G domain in the interval 31 to 309 (DLALPAIAVI…LVHHIELSLP (279 aa)). Positions 41-48 (GDQSSGKS) are G1 motif. 41-48 (GDQSSGKS) lines the GTP pocket. Positions 66–68 (VTR) are G2 motif. The segment at 147 to 150 (DLPG) is G3 motif. Residues 147–151 (DLPGI) and 216–219 (TKPD) contribute to the GTP site. The segment at 216 to 219 (TKPD) is G4 motif. Residues 248-251 (RCRG) are G5 motif. Residues 549–635 (LEELMRHLKS…MEARNYLVKF (87 aa)) enclose the GED domain.

Belongs to the TRAFAC class dynamin-like GTPase superfamily. Dynamin/Fzo/YdjA family.

It localises to the cytoplasm. The polypeptide is Interferon-induced GTP-binding protein Mx1 (mx1) (Ictalurus punctatus (Channel catfish)).